We begin with the raw amino-acid sequence, 581 residues long: Arginine--tRNA ligase (581 aa).

The 'HIGH' region signature appears at 126 to 136 (PNLAKEMHVGH).

It belongs to the class-I aminoacyl-tRNA synthetase family. In terms of assembly, monomer.

Its subcellular location is the cytoplasm. It carries out the reaction tRNA(Arg) + L-arginine + ATP = L-arginyl-tRNA(Arg) + AMP + diphosphate. This is Arginine--tRNA ligase from Shewanella baltica (strain OS223).